A 517-amino-acid polypeptide reads, in one-letter code: Methylmalonyl-CoA decarboxylase subunit alpha (517 aa).

In terms of domain architecture, CoA carboxyltransferase N-terminal spans Ala4 to Gly260. The CoA carboxyltransferase C-terminal domain occupies Glu271–Gly513.

Belongs to the AccD/PCCB family. The methylmalonyl-CoA decarboxylase is composed of four subunits: the carboxyltransferase alpha subunit (MmdA), the tunnel beta subunit (MmdB), the biotin-containing gamma subunit (MmdC) and the delta subunit (MmdD).

It is found in the cell membrane. The enzyme catalyses (S)-methylmalonyl-CoA + Na(+)(in) + H(+)(out) = propanoyl-CoA + Na(+)(out) + CO2. Carboxyltransferase subunit of the sodium ion pump methylmalonyl-CoA decarboxylase, which converts the chemical energy of a decarboxylation reaction into an electrochemical gradient of Na(+) ions across the cytoplasmic membrane, thereby creating a sodium ion motive force that is used for ATP synthesis. The alpha subunit catalyzes the Na(+)-independent carboxyltransfer from methylmalonyl-CoA to the prosthetic biotin group located on the gamma subunit. The sequence is that of Methylmalonyl-CoA decarboxylase subunit alpha from Propionigenium modestum.